Consider the following 139-residue polypeptide: GSK3B-interacting protein (139 aa).

The interval 41–45 (VNDVL) is required for PRKAR2A interaction; contributes to a protective effect against H(2)O(2)-induced apoptosis. Positions 115–139 (SPAYREAFGNALLQRLEALKREGQS) are interaction with GSK3B and acts as a GSK3B inhibitor.

Belongs to the GSKIP family. Forms a complex composed of PRKAR2A or PRKAR2B, GSK3B and GSKIP through GSKIP interaction; facilitates PKA-induced phosphorylation of GSK3B leading to GSK3B inactivation; recruits DNM1L through GSK3B for PKA-mediated phosphorylation of DNM1L; promotes beta-catenin degradation through GSK3B-induced phosphorylation of beta-catenin; stabilizes beta-catenin and enhances Wnt-induced signaling through PKA-induced phosphorylation of beta-catenin. Interacts with GSK3B; induces GSK3B-mediated phosphorylation of GSKIP and inhibits GSK3B kinase activity. Post-translationally, phosphorylated by GSK3B.

It localises to the cytoplasm. The protein resides in the nucleus. A-kinase anchoring protein for GSK3B and PKA that regulates or facilitates their kinase activity towards their targets. The ternary complex enhances Wnt-induced signaling by facilitating the GSK3B- and PKA-induced phosphorylation of beta-catenin leading to beta-catenin degradation and stabilization respectively. Upon cAMP activation, the ternary complex contributes to neuroprotection against oxidative stress-induced apoptosis by facilitating the PKA-induced phosphorylation of DML1 and PKA-induced inactivation of GSK3B. During neurite outgrowth promotes neuron proliferation; while increases beta-catenin-induced transcriptional activity through GSK3B kinase activity inhibition, reduces N-cadherin level to promote cell cycle progression. May play a role in cleft palate formation and is required for postnatal life through modulation of the activity of GSK3B during development. The chain is GSK3B-interacting protein from Bos taurus (Bovine).